A 791-amino-acid chain; its full sequence is Probable phosphoketolase (791 aa).

This sequence belongs to the XFP family. It depends on thiamine diphosphate as a cofactor.

The sequence is that of Probable phosphoketolase from Chlorobaculum tepidum (strain ATCC 49652 / DSM 12025 / NBRC 103806 / TLS) (Chlorobium tepidum).